We begin with the raw amino-acid sequence, 434 residues long: UPF0597 protein CLD_2616 (434 aa).

The protein belongs to the UPF0597 family.

The polypeptide is UPF0597 protein CLD_2616 (Clostridium botulinum (strain Okra / Type B1)).